Reading from the N-terminus, the 262-residue chain is Hydroxyethylthiazole kinase (262 aa).

M39 is a binding site for substrate. Positions 115 and 160 each coordinate ATP. G187 provides a ligand contact to substrate.

Belongs to the Thz kinase family. The cofactor is Mg(2+).

The catalysed reaction is 5-(2-hydroxyethyl)-4-methylthiazole + ATP = 4-methyl-5-(2-phosphooxyethyl)-thiazole + ADP + H(+). It participates in cofactor biosynthesis; thiamine diphosphate biosynthesis; 4-methyl-5-(2-phosphoethyl)-thiazole from 5-(2-hydroxyethyl)-4-methylthiazole: step 1/1. Its function is as follows. Catalyzes the phosphorylation of the hydroxyl group of 4-methyl-5-beta-hydroxyethylthiazole (THZ). In Staphylococcus epidermidis (strain ATCC 12228 / FDA PCI 1200), this protein is Hydroxyethylthiazole kinase.